We begin with the raw amino-acid sequence, 95 residues long: Large ribosomal subunit protein uL23 (95 aa).

It belongs to the universal ribosomal protein uL23 family. As to quaternary structure, part of the 50S ribosomal subunit. Contacts protein L29, and trigger factor when it is bound to the ribosome.

In terms of biological role, one of the early assembly proteins it binds 23S rRNA. One of the proteins that surrounds the polypeptide exit tunnel on the outside of the ribosome. Forms the main docking site for trigger factor binding to the ribosome. This is Large ribosomal subunit protein uL23 from Rubrobacter xylanophilus (strain DSM 9941 / JCM 11954 / NBRC 16129 / PRD-1).